Reading from the N-terminus, the 591-residue chain is BRCA1-associated protein (591 aa).

S52 carries the phosphoserine modification. The segment covering 82–93 (DEVRDTVEEKKP) has biased composition (basic and acidic residues). A disordered region spans residues 82 to 124 (DEVRDTVEEKKPSAAPVSAQRSREQSESVNTAPESPSKQLPDQ). Positions 108–124 (ESVNTAPESPSKQLPDQ) are enriched in polar residues. Phosphoserine is present on residues S116 and S118. Residues 263–303 (CTVCLERMDESVNGILTTLCNHSFHSQCLQRWDDTTCPVCR) form an RING-type zinc finger. The UBP-type; degenerate zinc finger occupies 300–392 (PVCRYCQTPE…GKIVQYECEG (93 aa)). Positions 316, 319, 328, 331, 336, 343, 347, and 353 each coordinate Zn(2+). The stretch at 430–536 (EKDTAEEINN…EIQEQLRDVM (107 aa)) forms a coiled coil. Residues 563-591 (IAMASAPNPPSSGAGGKLQSRKGRSKRGK) are disordered. Residues 581–591 (QSRKGRSKRGK) are compositionally biased toward basic residues.

As to quaternary structure, interacts with the nuclear localization signal of BRCA1 and with the N-terminal of KSR1. The C-terminal portion of BRCA1 interacts with DDB1. As to expression, isoform 2 is highly expressed in testis, lower levels in brain, heart, lung, stomach, colon, uterus, liver and kidney. Isoform 1 is only expressed in the testis. Isoform 2 is predominant over isoform 1 in both fetal and adult testis.

Its subcellular location is the cytoplasm. It catalyses the reaction S-ubiquitinyl-[E2 ubiquitin-conjugating enzyme]-L-cysteine + [acceptor protein]-L-lysine = [E2 ubiquitin-conjugating enzyme]-L-cysteine + N(6)-ubiquitinyl-[acceptor protein]-L-lysine.. It functions in the pathway protein modification; protein ubiquitination. In terms of biological role, negatively regulates MAP kinase activation by limiting the formation of Raf/MEK complexes probably by inactivation of the KSR1 scaffold protein. Also acts as a Ras responsive E3 ubiquitin ligase that, on activation of Ras, is modified by auto-polyubiquitination resulting in the release of inhibition of Raf/MEK complex formation. May also act as a cytoplasmic retention protein with a role in regulating nuclear transport. The chain is BRCA1-associated protein from Mus musculus (Mouse).